The chain runs to 106 residues: MVNVPKTRKTYCKGKECRKHAQHKVTQYKAGKASLYAQGKRRYDRKQSGFGGQTKQIFHKKAKTTKKVVLRLECMSCKTKTQLALKRCKHFELGGEKKQKGQALQF.

This sequence belongs to the eukaryotic ribosomal protein eL42 family.

This is Large ribosomal subunit protein eL42 (RPL44) from Kluyveromyces lactis (strain ATCC 8585 / CBS 2359 / DSM 70799 / NBRC 1267 / NRRL Y-1140 / WM37) (Yeast).